The primary structure comprises 116 residues: M-zodatoxin-Lt6a/c (116 aa).

Residues Met1–Thr22 form the signal peptide. 2 consecutive propeptides follow at residues Val23–Arg44 and Glu80–Arg83. 2 short sequence motifs (processing quadruplet motif) span residues Asp41–Arg44 and Glu80–Arg83. Gln84 is modified (pyrrolidone carboxylic acid).

Belongs to the cationic peptide 03 (latarcin) family. 06 subfamily. Cleavage of the propeptide depends on the processing quadruplet motif (XXXR, with at least one of X being E). In terms of tissue distribution, expressed by the venom gland.

It is found in the secreted. Does not have antimicrobial activity against Gram-positive bacteria (A.globiformis VKM Ac-1112 (MIC&gt;70 uM) and B.subtilis VKM B-501 (MIC&gt;70 uM)), Gram-negative bacteria (E.coli DH5-alpha (MIC&gt;70 uM), E.coli MH1 (MIC&gt;70 uM) and P.aeruginosa PAO1 (MIC&gt;70 uM)), yeast (P.pastoris GS115 (MIC&gt;70 uM) or S.cerevisiae Y190 (MIC&gt;70 uM)). Does not have hemolytic activity against rabbit erythrocytes. However, it causes some conductance changes in planar bilayer membranes, without membrane rupture, suggesting a cytolytic function on other biological targets. It causes paralysis, but is not lethal when injected into insect larvae. This is M-zodatoxin-Lt6a/c from Lachesana tarabaevi (Spider).